The primary structure comprises 335 residues: DNA polymerase beta (335 aa).

A Glycyl lysine isopeptide (Lys-Gly) (interchain with G-Cter in ubiquitin) cross-link involves residue lysine 41. Residue lysine 60 participates in K(+) binding. Position 60 (lysine 60) interacts with Na(+). Lysine 61 is covalently cross-linked (Glycyl lysine isopeptide (Lys-Gly) (interchain with G-Cter in ubiquitin)). The K(+) site is built by leucine 62 and valine 65. Na(+) contacts are provided by leucine 62 and valine 65. Catalysis depends on lysine 72, which acts as the Nucleophile; Schiff-base intermediate with DNA; for 5'-dRP lyase activity. N6-acetyllysine is present on lysine 72. Lysine 81 participates in a covalent cross-link: Glycyl lysine isopeptide (Lys-Gly) (interchain with G-Cter in ubiquitin). At arginine 83 the chain carries Omega-N-methylarginine; by PRMT6. K(+) is bound by residues threonine 101, valine 103, and isoleucine 106. Positions 101, 103, and 106 each coordinate Na(+). Arginine 149 contacts a 2'-deoxyribonucleoside 5'-triphosphate. Position 152 is an omega-N-methylarginine; by PRMT6 (arginine 152). A 2'-deoxyribonucleoside 5'-triphosphate is bound by residues serine 180, arginine 183, glycine 189, and aspartate 190. Positions 183–192 (RGAESSGDMD) are DNA-binding. Mg(2+) is bound by residues aspartate 190, aspartate 192, and aspartate 256.

This sequence belongs to the DNA polymerase type-X family. In terms of assembly, monomer. Binds single-stranded DNA (ssDNA). Interacts with APEX1, LIG1, LIG3, FEN1, PCNA and XRCC1. Interacts with HUWE1/ARF-BP1, STUB1/CHIP and USP47. Interacts with FAM168A. Requires Mg(2+) as cofactor. Post-translationally, methylation by PRMT6 stimulates the polymerase activity by enhancing DNA binding and processivity. In terms of processing, ubiquitinated at Lys-41, Lys-61 and Lys-81: monoubiquitinated by HUWE1/ARF-BP1. Monoubiquitinated protein is then the target of STUB1/CHIP, which catalyzes polyubiquitination from monoubiquitin, leading to degradation by the proteasome. USP47 mediates the deubiquitination of monoubiquitinated protein, preventing polyubiquitination by STUB1/CHIP and its subsequent degradation.

Its subcellular location is the nucleus. It localises to the cytoplasm. The enzyme catalyses DNA(n) + a 2'-deoxyribonucleoside 5'-triphosphate = DNA(n+1) + diphosphate. It catalyses the reaction a 5'-end 2'-deoxyribose-2'-deoxyribonucleotide-DNA = (2E,4S)-4-hydroxypenten-2-al-5-phosphate + a 5'-end 5'-phospho-2'-deoxyribonucleoside-DNA + H(+). The catalysed reaction is 2'-deoxyribonucleotide-(2'-deoxyribose 5'-phosphate)-2'-deoxyribonucleotide-DNA = a 3'-end 2'-deoxyribonucleotide-(2,3-dehydro-2,3-deoxyribose 5'-phosphate)-DNA + a 5'-end 5'-phospho-2'-deoxyribonucleoside-DNA + H(+). In terms of biological role, repair polymerase that plays a key role in base-excision repair. During this process, the damaged base is excised by specific DNA glycosylases, the DNA backbone is nicked at the abasic site by an apurinic/apyrimidic (AP) endonuclease, and POLB removes 5'-deoxyribose-phosphate from the preincised AP site acting as a 5'-deoxyribose-phosphate lyase (5'-dRP lyase); through its DNA polymerase activity, it adds one nucleotide to the 3' end of the arising single-nucleotide gap. Conducts 'gap-filling' DNA synthesis in a stepwise distributive fashion rather than in a processive fashion as for other DNA polymerases. It is also able to cleave sugar-phosphate bonds 3' to an intact AP site, acting as an AP lyase. This Mus musculus (Mouse) protein is DNA polymerase beta (Polb).